We begin with the raw amino-acid sequence, 168 residues long: Sec-independent protein translocase protein TatB (168 aa).

Residues 1 to 21 (MIDLGISKLALIGAVALIVIG) form a helical membrane-spanning segment.

This sequence belongs to the TatB family. The Tat system comprises two distinct complexes: a TatABC complex, containing multiple copies of TatA, TatB and TatC subunits, and a separate TatA complex, containing only TatA subunits. Substrates initially bind to the TatABC complex, which probably triggers association of the separate TatA complex to form the active translocon.

Its subcellular location is the cell inner membrane. Its function is as follows. Part of the twin-arginine translocation (Tat) system that transports large folded proteins containing a characteristic twin-arginine motif in their signal peptide across membranes. Together with TatC, TatB is part of a receptor directly interacting with Tat signal peptides. TatB may form an oligomeric binding site that transiently accommodates folded Tat precursor proteins before their translocation. This is Sec-independent protein translocase protein TatB from Cupriavidus pinatubonensis (strain JMP 134 / LMG 1197) (Cupriavidus necator (strain JMP 134)).